A 308-amino-acid polypeptide reads, in one-letter code: SAP30-binding protein (308 aa).

Residues 15–101 (AEDSEPESDG…EAEKRDPQEL (87 aa)) form a disordered region. Residues 16–26 (EDSEPESDGEA) show a composition bias toward acidic residues. Phosphoserine is present on residues S18, S22, S43, and S52. Residues 57-78 (DEDGYEEEEDENSRQSEDDDSE) are compositionally biased toward acidic residues. Residues 79 to 99 (TEKPEADDPKDNTEAEKRDPQ) are compositionally biased toward basic and acidic residues. A Glycyl lysine isopeptide (Lys-Gly) (interchain with G-Cter in SUMO2) cross-link involves residue K95. A Phosphoserine modification is found at S113. Glycyl lysine isopeptide (Lys-Gly) (interchain with G-Cter in SUMO2) cross-links involve residues K220, K304, and K305.

Belongs to the HCNGP family. Interacts with histone deacetylase complex subunit SAP30.

The protein resides in the nucleus. Functionally, plays a role in transcriptional repression by promoting histone deacetylase activity, leading to deacetylation of histone H3. May be involved in the regulation of beta-2-microglobulin genes. Its function is as follows. (Microbial infection) Involved in transcriptional repression of HHV-1 genes TK and gC. This Homo sapiens (Human) protein is SAP30-binding protein.